The following is a 136-amino-acid chain: Flagellar assembly factor FliW 2 (136 aa).

This sequence belongs to the FliW family. In terms of assembly, interacts with translational regulator CsrA and flagellin(s).

The protein localises to the cytoplasm. Its function is as follows. Acts as an anti-CsrA protein, binds CsrA and prevents it from repressing translation of its target genes, one of which is flagellin. Binds to flagellin and participates in the assembly of the flagellum. This Wolinella succinogenes (strain ATCC 29543 / DSM 1740 / CCUG 13145 / JCM 31913 / LMG 7466 / NCTC 11488 / FDC 602W) (Vibrio succinogenes) protein is Flagellar assembly factor FliW 2.